The chain runs to 331 residues: Dof zinc finger protein DOF1.1 (331 aa).

The segment at 77-131 (LKCPRCDSSNTKFCYYNNYNLTQPRHFCKGCRRYWTQGGALRNVPVGGGCRRNNK) adopts a Dof-type zinc-finger fold. Residues C79, C82, C104, and C107 each contribute to the Zn(2+) site. Disordered regions lie at residues 121–166 (PVGG…TNHQ) and 291–331 (EEQP…NDLL). Residues 135 to 160 (NGNLKSSSSSSKQSSSVNAQSPSSGQ) show a composition bias toward low complexity. Residues 305 to 316 (GLTSPGNQTNQY) show a composition bias toward polar residues.

Interacts with OBF4. Expressed in the vasculature (mainly in the phloem and associated cell files) of cotyledons, leaves, roots, flower stalks and petals. The PEAR proteins (e.g. DOF2.4, DOF5.1, DOF3.2, DOF1.1, DOF5.6 and DOF5.3) form a short-range concentration gradient that peaks at protophloem sieve elements (PSE).

It localises to the nucleus. Functionally, transcription factor that binds specifically to a 5'-AA[AG]G-3' consensus core sequence. Enhances the DNA binding of OBF transcription factors to OCS elements. Involved in the regulation of root development. The PEAR proteins (e.g. DOF2.4, DOF5.1, DOF3.2, DOF1.1, DOF5.6 and DOF5.3) activate gene expression that promotes radial growth of protophloem sieve elements. Element of a regulatory network controlling indole glucosinolates (IGS) biosynthesis, probably by inducing the expression of accurate genes (e.g. CYP83B1). Promotes apical dominance. In Arabidopsis thaliana (Mouse-ear cress), this protein is Dof zinc finger protein DOF1.1.